The sequence spans 397 residues: Carnitine transport ATP-binding protein OpuCA (397 aa).

Positions 2 to 236 (LKFEHVTKTY…PANSFVEDFI (235 aa)) constitute an ABC transporter domain. 35-42 (GPSGCGKT) is a binding site for ATP. CBS domains are found at residues 255–311 (MNTN…ATSV) and 315–373 (IEKN…WGTL). Positions 377 to 397 (TENQEEQADSKTTEPEMKQEG) are disordered. The span at 384 to 397 (ADSKTTEPEMKQEG) shows a compositional bias: basic and acidic residues.

This sequence belongs to the ABC transporter superfamily. In terms of assembly, the complex is composed of two ATP-binding proteins (OpuCA), two transmembrane proteins (OpuCB and OpuCD) and a solute-binding protein (OpuCC).

It catalyses the reaction a quaternary ammonium(out) + ATP + H2O = a quaternary ammonium(in) + ADP + phosphate + H(+). In terms of biological role, part of the ABC transporter complex OpuCABCD involved in carnitine uptake. Probably responsible for energy coupling to the transport system. Involved, with BetL and GbuABC, in osmoprotection and cryoprotection of Listeria. Can also mediate weak glycine betaine transport. The polypeptide is Carnitine transport ATP-binding protein OpuCA (opuCA) (Listeria monocytogenes serotype 1/2a (strain 10403S)).